A 290-amino-acid chain; its full sequence is Sodium/potassium-transporting ATPase subunit beta-2 (290 aa).

Topologically, residues 1–39 (MVIQKEKKSCGQVVEEWKEFVWNPRTHQFMGRTGTSWAF) are cytoplasmic. A helical; Signal-anchor for type II membrane protein membrane pass occupies residues 40–67 (ILLFYLVFYGFLTAMFTLTMWVMLQTVS). Topologically, residues 68–290 (DHTPKYQDRL…VAFKLRINKT (223 aa)) are extracellular. Residues Asn-96 and Asn-118 are each glycosylated (N-linked (GlcNAc...) asparagine). Cys-129 and Cys-150 are disulfide-bonded. Residues Asn-153 and Asn-159 are each glycosylated (N-linked (GlcNAc...) asparagine). The cysteines at positions 160 and 177 are disulfide-linked. N-linked (GlcNAc...) asparagine glycans are attached at residues Asn-193, Asn-197, and Asn-238. The immunoglobulin-like stretch occupies residues 193–290 (NQSMNVTCAG…VAFKLRINKT (98 aa)). Cys-200 and Cys-261 are joined by a disulfide.

Belongs to the X(+)/potassium ATPases subunit beta family. As to quaternary structure, the sodium/potassium-transporting ATPase is composed of a catalytic alpha subunit, an auxiliary non-catalytic beta subunit and an additional regulatory subunit. Interacts with isoform 2 of BSG.

The protein resides in the cell membrane. In terms of biological role, this is the non-catalytic component of the active enzyme, which catalyzes the hydrolysis of ATP coupled with the exchange of Na(+) and K(+) ions across the plasma membrane. The exact function of the beta-2 subunit is not known. Its function is as follows. Mediates cell adhesion of neurons and astrocytes, and promotes neurite outgrowth. The chain is Sodium/potassium-transporting ATPase subunit beta-2 (ATP1B2) from Homo sapiens (Human).